The following is a 64-amino-acid chain: Large ribosomal subunit protein bL28 (64 aa).

The protein belongs to the bacterial ribosomal protein bL28 family.

The polypeptide is Large ribosomal subunit protein bL28 (Trichlorobacter lovleyi (strain ATCC BAA-1151 / DSM 17278 / SZ) (Geobacter lovleyi)).